A 400-amino-acid chain; its full sequence is Elongation factor Tu (400 aa).

The 200-residue stretch at 10–209 folds into the tr-type G domain; sequence KPHINIGTIG…AVDDYIPTPE (200 aa). Residues 19 to 26 form a G1 region; that stretch reads GHVDHGKT. 19–26 is a GTP binding site; sequence GHVDHGKT. T26 contacts Mg(2+). The segment at 60-64 is G2; that stretch reads GITIS. Residues 81–84 form a G3 region; sequence DCPG. GTP-binding positions include 81–85 and 136–139; these read DCPGH and NKVD. The interval 136–139 is G4; it reads NKVD. The segment at 174 to 176 is G5; sequence SAK.

Belongs to the TRAFAC class translation factor GTPase superfamily. Classic translation factor GTPase family. EF-Tu/EF-1A subfamily. As to quaternary structure, monomer.

It localises to the cytoplasm. It catalyses the reaction GTP + H2O = GDP + phosphate + H(+). Its function is as follows. GTP hydrolase that promotes the GTP-dependent binding of aminoacyl-tRNA to the A-site of ribosomes during protein biosynthesis. This Herpetosiphon aurantiacus (Herpetosiphon giganteus) protein is Elongation factor Tu.